The following is a 1150-amino-acid chain: Serine/threonine-protein phosphatase 2A regulatory subunit B'' subunit alpha (1150 aa).

The interval 661–693 is disordered; it reads PEVIKIQNKPEKKPGTPLPPPATSPSSPRPLSP. The segment covering 676–693 has biased composition (pro residues); it reads TPLPPPATSPSSPRPLSP. EF-hand domains lie at 758–793 and 972–1007; these read CPLY…LLNN and RNPT…QCER. Residues Asp985, Asp987, Asp989, and Glu996 each contribute to the Ca(2+) site. A disordered region spans residues 1105–1132; that stretch reads AQFQEGFEDYETDEPASPSEFGNKSNKI.

In terms of assembly, PP2A consists of a common heterodimeric core enzyme, composed of a 36 kDa catalytic subunit (subunit C) and a 65 kDa constant regulatory subunit (PR65 or subunit A), that associates with a variety of regulatory subunits. Proteins that associate with the core dimer include three families of regulatory subunits B (the R2/B/PR55/B55, R3/B''/PR72/PR130/PR59 and R5/B'/B56 families), the 48 kDa variable regulatory subunit, viral proteins, and cell signaling molecules. As to expression, expressed in heart, brain, placenta, lung, muscle and kidney.

Functionally, the B regulatory subunit might modulate substrate selectivity and catalytic activity, and might also direct the localization of the catalytic enzyme to a particular subcellular compartment. The protein is Serine/threonine-protein phosphatase 2A regulatory subunit B'' subunit alpha (PPP2R3A) of Homo sapiens (Human).